The primary structure comprises 174 residues: Probable nicotinate-nucleotide adenylyltransferase (174 aa).

This sequence belongs to the NadD family.

It catalyses the reaction nicotinate beta-D-ribonucleotide + ATP + H(+) = deamido-NAD(+) + diphosphate. Its pathway is cofactor biosynthesis; NAD(+) biosynthesis; deamido-NAD(+) from nicotinate D-ribonucleotide: step 1/1. In terms of biological role, catalyzes the reversible adenylation of nicotinate mononucleotide (NaMN) to nicotinic acid adenine dinucleotide (NaAD). This is Probable nicotinate-nucleotide adenylyltransferase from Helicobacter pylori (strain HPAG1).